The chain runs to 1867 residues: Probable serine/threonine-protein kinase roco8 (1867 aa).

Residues Ser16–Asn93 enclose the DEP 1 domain. Disordered regions lie at residues Asn96–Thr115 and Val121–Asn225. Residues Val121–Ser223 show a composition bias toward low complexity. The DEP 2 domain maps to Gly264–Met342. 8 LRR repeats span residues Arg491 to Thr512, Phe515 to Ala536, Asn540 to Leu561, Leu563 to Leu584, Asn586 to Leu607, Ser609 to Leu631, Arg633 to Pro656, and Leu657 to Lys678. Residues Gly693–Gln941 enclose the Roc domain. Disordered regions lie at residues Gln763–Pro813 and Ser942–Asn961. Positions Thr768 to Leu793 are enriched in low complexity. The COR domain occupies Pro974–Asn1111. Positions Ser1163–Pro1207 are disordered. Positions Leu1456–Ile1864 constitute a Protein kinase domain. Residues Ile1462–Val1470 and Lys1483 each bind ATP. The disordered stretch occupies residues Ser1509 to Asn1546. Asp1721 serves as the catalytic Proton acceptor.

The protein belongs to the protein kinase superfamily. TKL Ser/Thr protein kinase family. ROCO subfamily.

It catalyses the reaction L-seryl-[protein] + ATP = O-phospho-L-seryl-[protein] + ADP + H(+). The enzyme catalyses L-threonyl-[protein] + ATP = O-phospho-L-threonyl-[protein] + ADP + H(+). This is Probable serine/threonine-protein kinase roco8 (roco8) from Dictyostelium discoideum (Social amoeba).